Reading from the N-terminus, the 165-residue chain is uncharacterized protein (165 aa).

An N-terminal signal peptide occupies residues 1–17 (MIRGFFLILLFLLLAFF).

This is an uncharacterized protein from Aquifex aeolicus (strain VF5).